The primary structure comprises 208 residues: ATP-dependent Clp protease proteolytic subunit 2 (208 aa).

Ser102 functions as the Nucleophile in the catalytic mechanism. Residue His127 is part of the active site.

The protein belongs to the peptidase S14 family. In terms of assembly, fourteen ClpP subunits assemble into 2 heptameric rings which stack back to back to give a disk-like structure with a central cavity, resembling the structure of eukaryotic proteasomes.

It is found in the cytoplasm. It catalyses the reaction Hydrolysis of proteins to small peptides in the presence of ATP and magnesium. alpha-casein is the usual test substrate. In the absence of ATP, only oligopeptides shorter than five residues are hydrolyzed (such as succinyl-Leu-Tyr-|-NHMec, and Leu-Tyr-Leu-|-Tyr-Trp, in which cleavage of the -Tyr-|-Leu- and -Tyr-|-Trp bonds also occurs).. Functionally, cleaves peptides in various proteins in a process that requires ATP hydrolysis. Has a chymotrypsin-like activity. Plays a major role in the degradation of misfolded proteins. This is ATP-dependent Clp protease proteolytic subunit 2 from Chelativorans sp. (strain BNC1).